A 538-amino-acid chain; its full sequence is CTP synthase (538 aa).

The tract at residues 1 to 265 is amidoligase domain; sequence MARYIFVTGG…DLQVLNYFKL (265 aa). CTP is bound at residue S13. S13 serves as a coordination point for UTP. ATP-binding positions include 14 to 19 and D71; that span reads SLGKGL. Mg(2+)-binding residues include D71 and E139. Residues 146–148, 186–191, and K222 each bind CTP; these read DIE and KTKPTQ. Residues 186 to 191 and K222 each bind UTP; that span reads KTKPTQ. The Glutamine amidotransferase type-1 domain maps to 291-538; sequence NIAIIGKYVE…SFIKAAKNHK (248 aa). G353 contributes to the L-glutamine binding site. C380 functions as the Nucleophile; for glutamine hydrolysis in the catalytic mechanism. L-glutamine is bound by residues 381-384, E404, and R468; that span reads YGMQ. Active-site residues include H513 and E515.

Belongs to the CTP synthase family. In terms of assembly, homotetramer.

It carries out the reaction UTP + L-glutamine + ATP + H2O = CTP + L-glutamate + ADP + phosphate + 2 H(+). It catalyses the reaction L-glutamine + H2O = L-glutamate + NH4(+). The catalysed reaction is UTP + NH4(+) + ATP = CTP + ADP + phosphate + 2 H(+). Its pathway is pyrimidine metabolism; CTP biosynthesis via de novo pathway; CTP from UDP: step 2/2. Its activity is regulated as follows. Allosterically activated by GTP, when glutamine is the substrate; GTP has no effect on the reaction when ammonia is the substrate. The allosteric effector GTP functions by stabilizing the protein conformation that binds the tetrahedral intermediate(s) formed during glutamine hydrolysis. Inhibited by the product CTP, via allosteric rather than competitive inhibition. Functionally, catalyzes the ATP-dependent amination of UTP to CTP with either L-glutamine or ammonia as the source of nitrogen. Regulates intracellular CTP levels through interactions with the four ribonucleotide triphosphates. The polypeptide is CTP synthase (Pelagibacter ubique (strain HTCC1062)).